The chain runs to 323 residues: Galectin-4 (323 aa).

Galectin domains follow at residues 19–150 and 194–323; these read YYKP…INFI and YKTR…YVQI. Residue 256-262 participates in a beta-D-galactoside binding; sequence WGAEERK.

In terms of assembly, monomer.

Galectin that binds lactose and a related range of sugars. May be involved in the assembly of adherens junctions. The chain is Galectin-4 (LGALS4) from Sus scrofa (Pig).